The following is a 213-amino-acid chain: MTDFRQDFLKFSLAQNVLKFGEFTTKAGRRSPYFFNAGLFNDGASTLQLAKFYAQSIIESGIRFDMLFGPAYKGIILAAATAMMLAEKGVNVPFAYNRKEAKDRGEGGVLVGAPLKGRVLIIDDVISAGTSVRESIKLIEAEGATPAGVAIALDRMEKGTGELSAVQEVEKQYGLPVAPIASLNDLFILLQNNPEFGQFLEPVRTYRRQYGVE.

Lys-26 is a binding site for 5-phospho-alpha-D-ribose 1-diphosphate. 34-35 (FF) is a binding site for orotate. Residues 72–73 (YK), Arg-98, Lys-99, Lys-102, and 123–131 (DDVISAGTS) each bind 5-phospho-alpha-D-ribose 1-diphosphate. Orotate is bound by residues Ser-127 and Arg-155.

It belongs to the purine/pyrimidine phosphoribosyltransferase family. PyrE subfamily. In terms of assembly, homodimer. Mg(2+) serves as cofactor.

It carries out the reaction orotidine 5'-phosphate + diphosphate = orotate + 5-phospho-alpha-D-ribose 1-diphosphate. Its pathway is pyrimidine metabolism; UMP biosynthesis via de novo pathway; UMP from orotate: step 1/2. In terms of biological role, catalyzes the transfer of a ribosyl phosphate group from 5-phosphoribose 1-diphosphate to orotate, leading to the formation of orotidine monophosphate (OMP). The sequence is that of Orotate phosphoribosyltransferase from Neisseria gonorrhoeae (strain NCCP11945).